A 371-amino-acid chain; its full sequence is MTSIDPTHLGKKVIVGMSGGVDSSVSAYLLMKQGYQVEGLFMKNWEEDDTDEYCAAADDLKDAQAVCDKLGIKLHTVNFASEYWDNVFEYFLAEYKAGRTPNPDIMCNKEIKFKAFLEFADEILDADYIAMGHYVRRRDIDGTSQMLRGVDGNKDQSYFLYTLSHEQVARSLFPVGELEKSEVRDIAKEMGLITHDKKDSTGICFIGERKFTDFLSTFLPAQPGNIETSEGEVIGQHQGLMYHTLGQRKGLGIGGLKNSSEDPWYVVEKDLVRNVLVVGQGGNHPRLMSNGLLANQLHWVDRKGPAEGAKITLKTRYRQHDVPCTVTYDSDDQIRVIFDEAVAAVTPGQSAVFYDGEICLGGGIIDVLIRD.

ATP-binding positions include 16–23 (GMSGGVDS) and Met42. The interaction with target base in tRNA stretch occupies residues 102 to 104 (NPD). Catalysis depends on Cys107, which acts as the Nucleophile. A disulfide bridge links Cys107 with Cys204. An ATP-binding site is contributed by Gly132. Positions 154-156 (KDQ) are interaction with tRNA. The active-site Cysteine persulfide intermediate is Cys204. Residues 316–317 (RY) are interaction with tRNA.

The protein belongs to the MnmA/TRMU family.

The protein resides in the cytoplasm. It carries out the reaction S-sulfanyl-L-cysteinyl-[protein] + uridine(34) in tRNA + AH2 + ATP = 2-thiouridine(34) in tRNA + L-cysteinyl-[protein] + A + AMP + diphosphate + H(+). Functionally, catalyzes the 2-thiolation of uridine at the wobble position (U34) of tRNA, leading to the formation of s(2)U34. In Shewanella piezotolerans (strain WP3 / JCM 13877), this protein is tRNA-specific 2-thiouridylase MnmA.